The sequence spans 292 residues: MKILVPATSANLGPGFDCLGLSLKLFNETQIQKSGVFSISIGGEGSDNIFLKKNNIFVNIFYEIYEKLSGKKDNFRFIFQNNIPLSRGLGSSSAVIVGAIASAYYMSGFKVEKECILDEALIYENHPDNIAPATLGGFVCSLVEKNKVYSIKKEIDKDLAAVVVIPNLAMSTEQSRQALAKNLSFNDAVFNLSHASFLTACFLEKKYEFLKFASQDKLHEINRMKNLPELFEVQKFALENKALMSTLSGSGSSFFSLAFKDDALALAKKIQTKFKDFRVQYLEFDDNGFEIC.

84–94 contributes to the ATP binding site; it reads PLSRGLGSSSA.

This sequence belongs to the GHMP kinase family. Homoserine kinase subfamily.

The protein localises to the cytoplasm. The enzyme catalyses L-homoserine + ATP = O-phospho-L-homoserine + ADP + H(+). The protein operates within amino-acid biosynthesis; L-threonine biosynthesis; L-threonine from L-aspartate: step 4/5. In terms of biological role, catalyzes the ATP-dependent phosphorylation of L-homoserine to L-homoserine phosphate. This chain is Homoserine kinase, found in Campylobacter jejuni subsp. jejuni serotype O:2 (strain ATCC 700819 / NCTC 11168).